Reading from the N-terminus, the 993-residue chain is Type II inositol 1,4,5-trisphosphate 5-phosphatase (993 aa).

One can recognise a PH domain in the interval 22-148 (QGVLCKGDSR…PEFEWLSRHT (127 aa)). Composition is skewed to basic and acidic residues over residues 149–163 (CAEP…REWN) and 294–303 (SKSDMSEKVR). Disordered stretches follow at residues 149–191 (CAEP…GLED) and 236–304 (EALE…KVRS). Positions 342 to 668 (IQNFRFFVGT…LDKMENANIP (327 aa)) are 5-phosphatase. Positions 355 and 383 each coordinate Mg(2+). Substrate contacts are provided by residues E383, 459–460 (NK), 582–583 (YK), and 596–598 (KCR). The interval 669 to 782 (SVTLSKREFC…LSVSGNYLPS (114 aa)) is ASH. Residues 821 to 993 (SQLENPMEIP…FIHQFLCGPL (173 aa)) enclose the Rho-GAP domain. The residue at position 990 (C990) is a Cysteine methyl ester. C990 carries the S-farnesyl cysteine lipid modification. Residues 991-993 (GPL) constitute a propeptide, removed in mature form.

Belongs to the inositol 1,4,5-trisphosphate 5-phosphatase type II family. As to quaternary structure, interacts with APPL1, PHETA1 and PHETA2. Interacts with several Rab GTPases, at least RAB1A, RAB2A, RAB5A, RAB6A, RAB8A, RAB9A and RAB33B; these interactions may play a dual role in targeting INPP5B to the specific membranes and stimulating its phosphatase activity. Interacts preferentially with non-phosphorylated RAB8A; phosphorylation of RAB8A on 'Thr-72' disrupts this interaction. Interacts with INPP5F. Post-translationally, isoprenylation at Cys-990 may be required for localization at the membrane. In terms of processing, may be proteolytically cleaved after Lys-320 as inferred from N-terminal protein sequence of the 75 kda form. Detected in kidney, liver, brain, lung and testis (at protein level). Detected in kidney and liver, and at lower levels in brain, lung and testis.

It is found in the cytoplasm. It localises to the cytosol. The protein resides in the endoplasmic reticulum-Golgi intermediate compartment. Its subcellular location is the early endosome membrane. The protein localises to the membrane. It is found in the cytoplasmic vesicle. It localises to the phagosome membrane. It carries out the reaction a 1,2-diacyl-sn-glycero-3-phospho-(1D-myo-inositol-4,5-bisphosphate) + H2O = a 1,2-diacyl-sn-glycero-3-phospho-(1D-myo-inositol 4-phosphate) + phosphate. Its function is as follows. Hydrolyzes phosphatidylinositol 4,5-bisphosphate (PtIns(4,5)P2) and the signaling molecule phosphatidylinositol 1,4,5-trisphosphate (PtIns(1,4,5)P3), and thereby modulates cellular signaling events. In Mus musculus (Mouse), this protein is Type II inositol 1,4,5-trisphosphate 5-phosphatase (Inpp5b).